A 168-amino-acid chain; its full sequence is MQAIFQALNFNPWTFLFQTLNLLVVMGLLYVFLYKPLGKVLADREARIEGNLNDAAAAREKAENILAEYRQQLQGARQEAQAILDRATKMAEETRAEIINRAREEAERTLAQARREIEGEKSKALAAIRSEAASLAILAAGKVLERSLTPDDQERLAREAIAEVERLQ.

A helical transmembrane segment spans residues 13 to 33 (WTFLFQTLNLLVVMGLLYVFL).

The protein belongs to the ATPase B chain family. F-type ATPases have 2 components, F(1) - the catalytic core - and F(0) - the membrane proton channel. F(1) has five subunits: alpha(3), beta(3), gamma(1), delta(1), epsilon(1). F(0) has three main subunits: a(1), b(2) and c(10-14). The alpha and beta chains form an alternating ring which encloses part of the gamma chain. F(1) is attached to F(0) by a central stalk formed by the gamma and epsilon chains, while a peripheral stalk is formed by the delta and b chains.

It localises to the cell membrane. F(1)F(0) ATP synthase produces ATP from ADP in the presence of a proton or sodium gradient. F-type ATPases consist of two structural domains, F(1) containing the extramembraneous catalytic core and F(0) containing the membrane proton channel, linked together by a central stalk and a peripheral stalk. During catalysis, ATP synthesis in the catalytic domain of F(1) is coupled via a rotary mechanism of the central stalk subunits to proton translocation. Its function is as follows. Component of the F(0) channel, it forms part of the peripheral stalk, linking F(1) to F(0). This chain is ATP synthase subunit b, found in Moorella thermoacetica (strain ATCC 39073 / JCM 9320).